The sequence spans 166 residues: MSIAYDLLLSILIYLPAFIANGSGPFIKRGTPIDFGKNFVDGRRLFGDGKTFEGLIVALTFGTTVGVIISKFFTAEWTLISFLESLFAMIGDMIGAFIKRRLGIPRGGRVLGLDQLDFVLGASLILVLMRVNITWYQFLFICGLAFFLHQGTNYVAYLLKIKNVPW.

A run of 5 helical transmembrane segments spans residues 7 to 27 (LLLSILIYLPAFIANGSGPFI), 55 to 75 (LIVALTFGTTVGVIISKFFTA), 78 to 98 (TLISFLESLFAMIGDMIGAFI), 116 to 136 (LDFVLGASLILVLMRVNITWY), and 138 to 158 (FLFICGLAFFLHQGTNYVAYL).

The protein belongs to the CDP-archaeol synthase family. Requires Mg(2+) as cofactor.

The protein localises to the cell membrane. It carries out the reaction 2,3-bis-O-(geranylgeranyl)-sn-glycerol 1-phosphate + CTP + H(+) = CDP-2,3-bis-O-(geranylgeranyl)-sn-glycerol + diphosphate. Its pathway is membrane lipid metabolism; glycerophospholipid metabolism. Functionally, catalyzes the formation of CDP-2,3-bis-(O-geranylgeranyl)-sn-glycerol (CDP-archaeol) from 2,3-bis-(O-geranylgeranyl)-sn-glycerol 1-phosphate (DGGGP) and CTP. This reaction is the third ether-bond-formation step in the biosynthesis of archaeal membrane lipids. This Saccharolobus islandicus (strain Y.N.15.51 / Yellowstone #2) (Sulfolobus islandicus) protein is CDP-archaeol synthase.